A 369-amino-acid polypeptide reads, in one-letter code: Glutamate 5-kinase (369 aa).

Residue Lys11 coordinates ATP. Residues Ser51, Asp138, and Asn150 each coordinate substrate. ATP-binding positions include 170-171 (TD) and 212-218 (TGGMATK). The 79-residue stretch at 277–355 (NGTIVIDDGA…QDIYAVLGYE (79 aa)) folds into the PUA domain.

It belongs to the glutamate 5-kinase family.

It localises to the cytoplasm. It catalyses the reaction L-glutamate + ATP = L-glutamyl 5-phosphate + ADP. Its pathway is amino-acid biosynthesis; L-proline biosynthesis; L-glutamate 5-semialdehyde from L-glutamate: step 1/2. In terms of biological role, catalyzes the transfer of a phosphate group to glutamate to form L-glutamate 5-phosphate. This Aliivibrio salmonicida (strain LFI1238) (Vibrio salmonicida (strain LFI1238)) protein is Glutamate 5-kinase.